A 235-amino-acid polypeptide reads, in one-letter code: Glycerol-3-phosphate acyltransferase (235 aa).

The next 6 membrane-spanning stretches (helical) occupy residues 2 to 22, 56 to 76, 94 to 114, 126 to 146, 152 to 172, and 190 to 210; these read FTLI…TSII, TVTI…VVFF, LIAG…GFKG, FGIA…VVFL, VASI…KYLF, and FIHD…AAAI.

The protein belongs to the PlsY family. In terms of assembly, probably interacts with PlsX.

The protein resides in the cell inner membrane. It catalyses the reaction an acyl phosphate + sn-glycerol 3-phosphate = a 1-acyl-sn-glycero-3-phosphate + phosphate. Its pathway is lipid metabolism; phospholipid metabolism. Its function is as follows. Catalyzes the transfer of an acyl group from acyl-phosphate (acyl-PO(4)) to glycerol-3-phosphate (G3P) to form lysophosphatidic acid (LPA). This enzyme utilizes acyl-phosphate as fatty acyl donor, but not acyl-CoA or acyl-ACP. This is Glycerol-3-phosphate acyltransferase from Chlorobium phaeobacteroides (strain BS1).